A 360-amino-acid polypeptide reads, in one-letter code: Peptide chain release factor 1 (360 aa).

Glutamine 235 is modified (N5-methylglutamine). Positions 281-310 are disordered; sequence AERQRQDAAQAESRRLQVGSGDRSQRIRTY.

This sequence belongs to the prokaryotic/mitochondrial release factor family. Methylated by PrmC. Methylation increases the termination efficiency of RF1.

Its subcellular location is the cytoplasm. Functionally, peptide chain release factor 1 directs the termination of translation in response to the peptide chain termination codons UAG and UAA. The sequence is that of Peptide chain release factor 1 from Stenotrophomonas maltophilia (strain K279a).